Here is a 120-residue protein sequence, read N- to C-terminus: Holo-[acyl-carrier-protein] synthase (120 aa).

2 residues coordinate Mg(2+): aspartate 8 and glutamate 58.

The protein belongs to the P-Pant transferase superfamily. AcpS family. Mg(2+) serves as cofactor.

It is found in the cytoplasm. It carries out the reaction apo-[ACP] + CoA = holo-[ACP] + adenosine 3',5'-bisphosphate + H(+). Its function is as follows. Transfers the 4'-phosphopantetheine moiety from coenzyme A to a Ser of acyl-carrier-protein. The sequence is that of Holo-[acyl-carrier-protein] synthase from Anoxybacillus flavithermus (strain DSM 21510 / WK1).